Here is a 92-residue protein sequence, read N- to C-terminus: C-C motif chemokine 4 (92 aa).

The first 23 residues, 1 to 23, serve as a signal peptide directing secretion; the sequence is MKLCVTVLSLLVLMAAFCSPALS. Intrachain disulfides connect cysteine 34/cysteine 58 and cysteine 35/cysteine 74.

The protein belongs to the intercrine beta (chemokine CC) family. As to quaternary structure, homodimer. Interacts with CCR5.

Its subcellular location is the secreted. Monokine with inflammatory and chemokinetic properties. The polypeptide is C-C motif chemokine 4 (CCL4) (Bos taurus (Bovine)).